The chain runs to 363 residues: Transcription factor PIF6 (363 aa).

2 disordered regions span residues 154-204 (SEGS…RNDI) and 340-363 (IPNPNSLSNLDGATLHKKSRKTNR). The segment covering 178-188 (RTRKALVKRKR) has biased composition (basic residues). The bHLH domain maps to 188-237 (RNAEAYNSPERNQRNDINKKMRTLQNLLPNSHKDDNESMLDEAINYMTNL). Positions 340-350 (IPNPNSLSNLD) are enriched in polar residues. A compositionally biased stretch (basic residues) spans 354 to 363 (LHKKSRKTNR).

In terms of assembly, homodimer. Interacts with APRR1/TOC1. Binds to RGL2 and RGA. Associates to PTAC12/HMR/PAP5 which acts as a transcriptional coactivator. Mainly expressed in fruits and flowers and, to a lower extent, in leaves, stems, seedlings and roots.

The protein resides in the nucleus. Transcription factor. This chain is Transcription factor PIF6, found in Arabidopsis thaliana (Mouse-ear cress).